Here is a 231-residue protein sequence, read N- to C-terminus: Fibrillarin-like rRNA/tRNA 2'-O-methyltransferase (231 aa).

Residues 89–90 (TT), 108–109 (EF), 133–134 (DA), and 153–156 (DIAQ) each bind S-adenosyl-L-methionine.

Belongs to the methyltransferase superfamily. Fibrillarin family. Interacts with nop5. Component of box C/D small ribonucleoprotein (sRNP) particles that contain rpl7ae, FlpA and nop5, plus a guide RNA.

In terms of biological role, involved in pre-rRNA and tRNA processing. Utilizes the methyl donor S-adenosyl-L-methionine to catalyze the site-specific 2'-hydroxyl methylation of ribose moieties in rRNA and tRNA. Site specificity is provided by a guide RNA that base pairs with the substrate. Methylation occurs at a characteristic distance from the sequence involved in base pairing with the guide RNA. In Sulfolobus acidocaldarius (strain ATCC 33909 / DSM 639 / JCM 8929 / NBRC 15157 / NCIMB 11770), this protein is Fibrillarin-like rRNA/tRNA 2'-O-methyltransferase.